Consider the following 622-residue polypeptide: Auxin response factor 11 (622 aa).

Positions 145–247 (FVKILTASDT…DLRVGVRRLA (103 aa)) form a DNA-binding region, TF-B3. Disordered regions lie at residues 358-398 (SIQR…ISEI) and 483-513 (SNIS…TRSR). 2 stretches are compositionally biased toward polar residues: residues 376–387 (SALTPTPTQQQS) and 483–511 (SNIS…TSTR). One can recognise a PB1 domain in the interval 511–594 (RSRIKVQMQG…KKLFIYPSDE (84 aa)).

This sequence belongs to the ARF family. As to quaternary structure, homodimers and heterodimers.

The protein resides in the nucleus. In terms of biological role, auxin response factors (ARFs) are transcriptional factors that bind specifically to the DNA sequence 5'-TGTCTC-3' found in the auxin-responsive promoter elements (AuxREs). Could act as transcriptional activator or repressor. Formation of heterodimers with Aux/IAA proteins may alter their ability to modulate early auxin response genes expression. In Arabidopsis thaliana (Mouse-ear cress), this protein is Auxin response factor 11 (ARF11).